A 31-amino-acid polypeptide reads, in one-letter code: U13-ctenitoxin-Pn1b (31 aa).

Intrachain disulfides connect cysteine 3–cysteine 17, cysteine 10–cysteine 21, and cysteine 16–cysteine 30.

In terms of tissue distribution, expressed by the venom gland.

The protein localises to the secreted. Acts as a neurotoxin. This Phoneutria nigriventer (Brazilian armed spider) protein is U13-ctenitoxin-Pn1b.